The primary structure comprises 513 residues: Cytochrome P450 monooxygenase CYP3 (513 aa).

A disordered region spans residues 1 to 21; the sequence is MLPRSLGHSTSELSPPFDGPN. Cys451 contributes to the heme binding site.

The protein belongs to the cytochrome P450 family. Heme is required as a cofactor.

It participates in secondary metabolite biosynthesis. Its function is as follows. Cytochrome P450 monooxygenase; part of the gene cluster that mediates the biosynthesis of a tyrosine-derived cytochalasan acting as a fungal signal recognized by resistant rice plants and leads to avirulence in Pi33 resistant rice cultivars. The first step in the pathway is catalyzed by the hybrid PKS-NRPS ACE1, assisted by the enoyl reductase RAP1, that are responsible for fusion of the tyrosine precursor and the polyketide backbone. The polyketide synthase module (PKS) of ACE1 is responsible for the synthesis of the polyketide backbone and the downstream nonribosomal peptide synthetase (NRPS) amidates the carboxyl end of the polyketide with the tyrosine precursor. Because ACE1 lacks a designated enoylreductase (ER) domain, the required activity is provided the enoyl reductase RAP1. Reduction by the hydrolyase ORFZ, followed by dehydration and intra-molecular Diels-Alder cyclization by the Diels-Alderase ORF3 then yield the required isoindolone-fused macrocycle. A number of oxidative steps catalyzed by the tailoring enzymes identified within the cluster, including cytochrome P450 monooxygenases CYP1 to CYP4, the FAD-linked oxidoreductase OXR2 and the short-chain dehydrogenase/reductase OXR1, are further required to afford the final cytochalasans that confer avirulence and which have still to be identified. The monooxygenase CYP1 has been shown to be a site-selective C-18 hydroxylase whereas the function of CYP3 is the site-selective epoxidation of the C-6/C-7 olefin that is present in some intermediate compounds. Finally, SYN2 and RAP2 are not required for avirulence in Pi33 resistant rice cultivars. The sequence is that of Cytochrome P450 monooxygenase CYP3 from Pyricularia oryzae (strain 70-15 / ATCC MYA-4617 / FGSC 8958) (Rice blast fungus).